A 277-amino-acid polypeptide reads, in one-letter code: F41 fimbrial protein (277 aa).

The N-terminal stretch at 1–22 (MKKTLIALAVAASAAVSGSVMA) is a signal peptide.

The protein belongs to the fimbrial K88 protein family.

The protein localises to the fimbrium. Functionally, fimbriae (also called pili), polar filaments radiating from the surface of the bacterium to a length of 0.5-1.5 micrometers and numbering 100-300 per cell, enable bacteria to colonize the epithelium of specific host organs. In Escherichia coli, this protein is F41 fimbrial protein (FimF41a).